The following is a 65-amino-acid chain: Putative beta-neurotoxin RjAa4 (65 aa).

Residues 1 to 64 enclose the LCN-type CS-alpha/beta domain; that stretch reads KEGYPMGRDG…VWDSSTNKCG (64 aa). 4 cysteine pairs are disulfide-bonded: cysteine 11/cysteine 63, cysteine 15/cysteine 37, cysteine 22/cysteine 44, and cysteine 26/cysteine 46.

Belongs to the long (4 C-C) scorpion toxin superfamily. Sodium channel inhibitor family. Beta subfamily. Expressed by the venom gland.

The protein resides in the secreted. In terms of biological role, beta toxins bind voltage-independently at site-4 of sodium channels (Nav) and shift the voltage of activation toward more negative potentials thereby affecting sodium channel activation and promoting spontaneous and repetitive firing. This Rhopalurus junceus (Caribbean blue scorpion) protein is Putative beta-neurotoxin RjAa4.